The primary structure comprises 529 residues: Ribonuclease Y (529 aa).

A helical transmembrane segment spans residues 4 to 24; it reads GLIYISLEVLVACLITALIMY. Residues 216 to 297 form the KH domain; sequence LTTRIALPCS…NRIEEVYHRV (82 aa). Positions 342–435 constitute an HD domain; sequence ALQHSKEVAL…VCAADALSAG (94 aa).

Belongs to the RNase Y family.

The protein resides in the cell membrane. Endoribonuclease that initiates mRNA decay. The chain is Ribonuclease Y from Helicobacter pylori (strain HPAG1).